The chain runs to 471 residues: UDP-N-acetylmuramoylalanine--D-glutamate ligase (471 aa).

122–128 (GTNGKTT) lines the ATP pocket.

It belongs to the MurCDEF family.

It localises to the cytoplasm. The catalysed reaction is UDP-N-acetyl-alpha-D-muramoyl-L-alanine + D-glutamate + ATP = UDP-N-acetyl-alpha-D-muramoyl-L-alanyl-D-glutamate + ADP + phosphate + H(+). It functions in the pathway cell wall biogenesis; peptidoglycan biosynthesis. In terms of biological role, cell wall formation. Catalyzes the addition of glutamate to the nucleotide precursor UDP-N-acetylmuramoyl-L-alanine (UMA). The protein is UDP-N-acetylmuramoylalanine--D-glutamate ligase of Streptomyces coelicolor (strain ATCC BAA-471 / A3(2) / M145).